The sequence spans 184 residues: Large ribosomal subunit protein uL10 (184 aa).

Belongs to the universal ribosomal protein uL10 family. In terms of assembly, part of the ribosomal stalk of the 50S ribosomal subunit. The N-terminus interacts with L11 and the large rRNA to form the base of the stalk. The C-terminus forms an elongated spine to which L12 dimers bind in a sequential fashion forming a multimeric L10(L12)X complex.

In terms of biological role, forms part of the ribosomal stalk, playing a central role in the interaction of the ribosome with GTP-bound translation factors. This is Large ribosomal subunit protein uL10 from Gluconobacter oxydans (strain 621H) (Gluconobacter suboxydans).